The primary structure comprises 768 residues: UPF0313 protein VV2143 (768 aa).

A Radical SAM core domain is found at 363-640; it reads AYDMIKTSVN…LHKALLRYHD (278 aa). [4Fe-4S] cluster contacts are provided by Cys-377, Cys-381, and Cys-384. Residues 674 to 768 are disordered; the sequence is DARTPAQRRK…GGRNQPSRAR (95 aa). The segment covering 679–689 has biased composition (basic residues); that stretch reads AQRRKSGRHGA. A compositionally biased stretch (polar residues) spans 719–731; the sequence is GGQSNSAPSRSGS.

Belongs to the UPF0313 family. Requires [4Fe-4S] cluster as cofactor.

The polypeptide is UPF0313 protein VV2143 (Vibrio vulnificus (strain YJ016)).